Consider the following 364-residue polypeptide: Trans-enoyl reductase sthE (364 aa).

Residue 51-54 (TDYK) coordinates NADP(+). Substrate is bound at residue 137–144 (WGTAALAI). NADP(+) contacts are provided by residues 172–175 (ATAT), 195–198 (SESS), Tyr213, and 261–262 (LE). A substrate-binding site is contributed by 281 to 285 (GFEGQ). 351–352 (VK) contacts NADP(+).

It belongs to the zinc-containing alcohol dehydrogenase family. In terms of assembly, monomer.

The catalysed reaction is 7 malonyl-CoA + acetyl-CoA + 10 AH2 + 5 S-adenosyl-L-methionine + 2 H(+) = dehydroprobetaenone I + 10 A + 5 S-adenosyl-L-homocysteine + 7 CO2 + 8 CoA + 6 H2O. It participates in mycotoxin biosynthesis. Functionally, trans-enoyl reductase; part of the gene cluster that mediates the biosynthesis of the phytotoxin stemphyloxin II. The first step of the pathway is the synthesis of dehydroprobetaenone I by the polyketide synthase sthA and the enoyl reductase sthE via condensation of one acetyl-CoA starter unit with 7 malonyl-CoA units and 5 methylations. The C-terminal reductase (R) domain of sthA catalyzes the reductive release of the polyketide chain. Because sthA lacks a designated enoylreductase (ER) domain, the required activity is provided the enoyl reductase sthE. The short-chain dehydrogenase/reductase sthC then catalyzes reduction of dehydroprobetaenone I to probetaenone I. The cytochrome P450 monooxygenase sthF catalyzes successive epoxidation, oxidation (resulting from epoxide opening) and hydroxylation to install a tertiary alcohol in the decaline ring to yield betaenone C from dehydroprobetaenone I and betaenone B from probetaenone I. The FAD-linked oxidoreductase sthB is responsible for the conversion of betaenone C to betaenone A via an intramolecular aldol reaction between C-1 and C-17 to form the bridged tricyclic system in betaenone A. Finally, the cytochrome P450 monooxygenase sthD catalyzes the hydroxylation of C-15 to afford the final metabolite stemphyloxin II. The chain is Trans-enoyl reductase sthE from Phaeosphaeria nodorum (strain SN15 / ATCC MYA-4574 / FGSC 10173) (Glume blotch fungus).